A 504-amino-acid chain; its full sequence is ATP synthase subunit alpha, chloroplastic (504 aa).

Position 170–177 (170–177) interacts with ATP; the sequence is GDRQTGKT.

This sequence belongs to the ATPase alpha/beta chains family. In terms of assembly, F-type ATPases have 2 components, CF(1) - the catalytic core - and CF(0) - the membrane proton channel. CF(1) has five subunits: alpha(3), beta(3), gamma(1), delta(1), epsilon(1). CF(0) has four main subunits: a, b, b' and c.

The protein resides in the plastid. Its subcellular location is the chloroplast thylakoid membrane. It carries out the reaction ATP + H2O + 4 H(+)(in) = ADP + phosphate + 5 H(+)(out). In terms of biological role, produces ATP from ADP in the presence of a proton gradient across the membrane. The alpha chain is a regulatory subunit. This is ATP synthase subunit alpha, chloroplastic from Triticum aestivum (Wheat).